Consider the following 140-residue polypeptide: Cystatin-C (140 aa).

An N-terminal signal peptide occupies residues 1–20 (MASPLRSLMLLLAVLAVAWA). The Secondary area of contact signature appears at 75–79 (QLVAG). 2 disulfide bridges follow: Cys93–Cys103 and Cys117–Cys137. An N-linked (GlcNAc...) asparagine glycan is attached at Asn99.

This sequence belongs to the cystatin family.

It localises to the secreted. Functionally, as an inhibitor of cysteine proteinases, this protein is thought to serve an important physiological role as a local regulator of this enzyme activity. Known to inhibit cathepsin B, H, and L. In Rattus norvegicus (Rat), this protein is Cystatin-C (Cst3).